Reading from the N-terminus, the 547-residue chain is KsdD-like steroid dehydrogenase MSMEG_5835 (547 aa).

5–36 (DVIVVGAGLAGLVAACELVERGHSVIIVDQEN) lines the FAD pocket.

It belongs to the FAD-dependent oxidoreductase 2 family. Requires FAD as cofactor.

The protein operates within lipid metabolism; steroid biosynthesis. Its function is as follows. Able to catalyze the elimination of the C-1 and C-2 hydrogen atoms of the A-ring from the polycyclic ring structure of 3-ketosteroids, but the ketosteroid dehydrogenase activity is low compared to KsdD in the cholesterol degradation process. The low activity could be due to different substrate specificity. The sequence is that of KsdD-like steroid dehydrogenase MSMEG_5835 from Mycolicibacterium smegmatis (strain ATCC 700084 / mc(2)155) (Mycobacterium smegmatis).